Here is a 729-residue protein sequence, read N- to C-terminus: Serine/threonine-protein kinase TBK1 (729 aa).

In terms of domain architecture, Protein kinase spans 9–310; the sequence is WLLSDILGQG…ETSDILHRMV (302 aa). 15–23 is a binding site for ATP; the sequence is LGQGATANV. Lys-30 is covalently cross-linked (Glycyl lysine isopeptide (Lys-Gly) (interchain with G-Cter in ubiquitin)). Lys-38 is an ATP binding site. Asp-135 functions as the Proton acceptor in the catalytic mechanism. At Ser-172 the chain carries Phosphoserine; by autocatalysis and IKKB. The Ubiquitin-like domain maps to 309–385; that stretch reads MVIHVFSLQQ…ENPIFVVSRE (77 aa). Residue Lys-401 forms a Glycyl lysine isopeptide (Lys-Gly) (interchain with G-Cter in ubiquitin) linkage. Coiled-coil stretches lie at residues 407–657 and 658–713; these read DLDG…LQET and LPQK…ILER. At Lys-607 the chain carries N6-methyllysine; by SETD4. The segment at 621–729 is interaction with AZI2, TANK and TBKBP1; sequence RKMLHLRKQL…DGGLRNVDCL (109 aa). Lys-670 participates in a covalent cross-link: Glycyl lysine isopeptide (Lys-Gly) (interchain with G-Cter in ubiquitin). Ser-716 is subject to Phosphoserine.

This sequence belongs to the protein kinase superfamily. Ser/Thr protein kinase family. I-kappa-B kinase subfamily. Homodimer. Interacts with DDX3X, TIRAP and TRAF2. Part of a ternary complex consisting of TANK, TRAF2 and TBK1. Interacts with AZI2, TANK and TBKBP1; these interactions are mutually exclusive and mediate TBK1 activation. Interacts with GSK3B; this interaction promotes TBK1 self-association and autophosphorylation. Interacts with SIKE1; SIKE1 is associated with TBK1 under physiological condition and dissociated from TBK1 upon viral infection or TLR3 stimulation. Interacts with IRF3, leading to IRF3 phosphorylation. Interacts with RIGI. Interacts with CYLD. Interacts with OPTN and TRAF3. Interacts with SRC. Interacts with the exocyst complex subunit SEC5/EXOC2; this interaction is sufficient to trigger TBK1 activity. Interacts with STING1, leading to STING1 phosphorylation. Interacts with IFIT3 (via N-terminus). Interacts with MAVS; interaction only takes place in the presence of IFIT3 and leads to MAVS phosphorylation. Interacts (via protein kinase domain) with TTLL12 (via TTL domain); the interaction prevents MAVS binding to TBK1. Interacts with TICAM1; this interaction is enhanced in the presence of WDFY1 and leads to TICAM1 phosphorylation. Interacts with TRIM26. Interacts with TRIM23. Interacts with TTC4 and IKBKE. Interacts with HNRNPA2B1. Interacts with DDX3X. Interacts with TRIM14. Interacts with CEP170; efficient complex formation may be dependent on the presence of CCDC61. Interacts with TRAF3IP3. Interacts with HSP90AA1; the interaction mediates TBK1 association with TOMM70. Interacts with TAX1BP1. Interacts with kinase IKBKB; the complex interacts with STAT1, leading to phosphorylation of STAT1 on 'Thr-749' by IKBKB. Interacts with ICOS; this interaction is critical for the maturation of T follicular regulatory cells. Interacts with RNF144B; this interaction prevents TBK1 phosphorylation and subsequent activation. Interacts with ASB8; this interaction promotes TBK1 proteasomal degradation. Forms a ternary complex with ZNF268 and SETD4; the interaction with SETD4 is ZNF268-dependent and leads to TBK1 monomethylation, which enhances its interaction with IRF3 and MAVS. As to quaternary structure, (Microbial infection) Interacts with Borna disease virus (BDV) P protein leading to its phosphorylation. In terms of assembly, (Microbial infection) Interacts with Ebola virus protein VP35. (Microbial infection) Interacts with HCV NS3; this interaction leads to inhibition of cellular antiviral response by blocking necessary interactions between the TBK1 and its substrates IRF3 and IRF7. As to quaternary structure, (Microbial infection) Interacts with human herpesvirus 1 protein ICP34.5. In terms of assembly, (Microbial infection) Interacts with Zika virus non-structural protein 1/NS1 and non-structural protein 4B/NS4B. (Microbial infection) Interacts with SARS-CoV-2 non-structural protein 6; this interaction decreases IRF3 phosphorylation by 57%, which leads to reduced IFN-beta (IFNB) production. Interacts with SARS-CoV-2 helicase; this interaction inhibits TBK1 phosphorylation and decreases IRF3 phosphorylation by 75%, which leads to reduced IFN-beta production. Interacts with SARS-CoV-2 M protein; the interaction promotes TBK1 degradation via 'Lys-48'-linked ubiquitination. As to quaternary structure, (Microbial infection) Interacts with human cytomegalovirus protein UL35; this interaction inhibits type I interferon production. In terms of assembly, (Microbial infection) Interacts with heartland virus NSs; this interaction antagonizes TBK1 phosphorylation and inhibits TBK1-IRF3 interaction and thus the establishment of an antiviral state. (Microbial infection) Interacts (via N-terminus) with Severe fever with thrombocytopenia virus (SFTSV) NSs; this interaction antagonizes TBK1 phosphorylation and sequesters TBK1 in NSs-induced cytoplasmic inclusion bodies thereby inhibiting the IFN responses. In terms of processing, autophosphorylation at Ser-172 activates the kinase, and is an essential step for virus-triggered signaling. Phosphorylated by IKBKB/IKKB at Ser-172. Phosphorylation requires homodimerization and ubiquitination at Lys-30 and Lys-401. Dephosphorylated at Ser-172 by PPM1B and this negatively regulates its role in mediating antiviral response. 'Lys-63'-linked polyubiquitination by MIB1 after RNA virus infection, or by NRDP1 after LPS stimulation at Lys-30 and Lys-401, participates in kinase activation. 'Lys-48'-linked polyubiquitination at Lys-670 by DTX4 leads to proteasomal degradation. 'Lys-48'-linked polyubiquitination by TRAIP also leads to proteasomal degradation. 'Lys-48'-linked polyubiquitination by TRAF7; leading to proteasomal degradation. 'Lys-63'-linked polyubiquitination by RNF128 at Lys-30 and Lys-401 leads to the activation of antiviral responses. 'Lys-48'-linked polyubiquitination after 'lys-33'-linked deubiquitination by USP38 promotes TBK1 degradation. Post-translationally, (Microbial infection) Interaction with SARS-CoV-2 M protein induces 'Lys-48'-linked ubiquitination which leads to proteasomal degradation. In terms of processing, (Microbial infection) Deubiquitinated by Epstein-Barr virus BPLF1 on both 'Lys-48' and 'Lys-63'-linked ubiquitin chains; leading to inhibition of type I interfewron production. Monomethylation at Lys-607 by SETD4 maximizes TBK1 activation and promotes efficient interferon signaling. Ubiquitous with higher expression in testis. Expressed in the ganglion cells, nerve fiber layer and microvasculature of the retina.

It localises to the cytoplasm. The enzyme catalyses L-seryl-[protein] + ATP = O-phospho-L-seryl-[protein] + ADP + H(+). It catalyses the reaction L-threonyl-[protein] + ATP = O-phospho-L-threonyl-[protein] + ADP + H(+). Serine/threonine kinase that plays an essential role in regulating inflammatory responses to foreign agents. Following activation of toll-like receptors by viral or bacterial components, associates with TRAF3 and TANK and phosphorylates interferon regulatory factors (IRFs) IRF3 and IRF7 as well as DDX3X. This activity allows subsequent homodimerization and nuclear translocation of the IRFs leading to transcriptional activation of pro-inflammatory and antiviral genes including IFNA and IFNB. In order to establish such an antiviral state, TBK1 form several different complexes whose composition depends on the type of cell and cellular stimuli. Plays a key role in IRF3 activation: acts by first phosphorylating innate adapter proteins MAVS, STING1 and TICAM1 on their pLxIS motif, leading to recruitment of IRF3, thereby licensing IRF3 for phosphorylation by TBK1. Phosphorylated IRF3 dissociates from the adapter proteins, dimerizes, and then enters the nucleus to induce expression of interferons. Thus, several scaffolding molecules including FADD, TRADD, MAVS, AZI2, TANK or TBKBP1/SINTBAD can be recruited to the TBK1-containing-complexes. Under particular conditions, functions as a NF-kappa-B effector by phosphorylating NF-kappa-B inhibitor alpha/NFKBIA, IKBKB or RELA to translocate NF-Kappa-B to the nucleus. Restricts bacterial proliferation by phosphorylating the autophagy receptor OPTN/Optineurin on 'Ser-177', thus enhancing LC3 binding affinity and antibacterial autophagy. Phosphorylates SMCR8 component of the C9orf72-SMCR8 complex, promoting autophagosome maturation. Phosphorylates ATG8 proteins MAP1LC3C and GABARAPL2, thereby preventing their delipidation and premature removal from nascent autophagosomes. Seems to play a role in energy balance regulation by sustaining a state of chronic, low-grade inflammation in obesity, which leads to a negative impact on insulin sensitivity. Attenuates retroviral budding by phosphorylating the endosomal sorting complex required for transport-I (ESCRT-I) subunit VPS37C. Phosphorylates Borna disease virus (BDV) P protein. Plays an essential role in the TLR3- and IFN-dependent control of herpes virus HSV-1 and HSV-2 infections in the central nervous system. Acts both as a positive and negative regulator of the mTORC1 complex, depending on the context: activates mTORC1 in response to growth factors by catalyzing phosphorylation of MTOR, while it limits the mTORC1 complex by promoting phosphorylation of RPTOR. Acts as a positive regulator of the mTORC2 complex by mediating phosphorylation of MTOR, leading to increased phosphorylation and activation of AKT1. Phosphorylates and activates AKT1. Involved in the regulation of TNF-induced RIPK1-mediated cell death, probably acting via CYLD phosphorylation that in turn controls RIPK1 ubiquitination status. Also participates in the differentiation of T follicular regulatory cells together with the receptor ICOS. The sequence is that of Serine/threonine-protein kinase TBK1 from Homo sapiens (Human).